The sequence spans 574 residues: Alpha-farnesene synthase (574 aa).

Positions 326, 330, and 478 each coordinate Mn(2+). A DDXXD motif motif is present at residues D326–D330.

Belongs to the terpene synthase family. Tpsd subfamily. Requires Mn(2+) as cofactor.

It localises to the cytoplasm. It catalyses the reaction (2E,6E)-farnesyl diphosphate = (3E,6E)-alpha-farnesene + diphosphate. Its pathway is terpene metabolism; oleoresin biosynthesis. Functionally, involved in sesquiterpene (C15) biosynthesis. The major product is alpha-farnesene. The polypeptide is Alpha-farnesene synthase (PT5) (Pinus taeda (Loblolly pine)).